A 753-amino-acid chain; its full sequence is Rsm22-cox11 tandem protein 2, mitochondrial (753 aa).

The transit peptide at 1–39 (MPILTCRYKILFLYNLRNCFTFQNQRCLIPYGTTTTIRW) directs the protein to the mitochondrion. [4Fe-4S] cluster contacts are provided by cysteine 323, cysteine 329, cysteine 342, and cysteine 430. The chain crosses the membrane as a helical span at residues 571 to 591 (IYYLVAISIFALGLTYAAVPL). Topologically, residues 592-753 (YRLFCSKTGY…TNGNLLTKLN (162 aa)) are mitochondrial intermembrane.

The protein in the N-terminal section; belongs to the methyltransferase superfamily. Rsm22 family. In the C-terminal section; belongs to the COX11/CtaG family. As to quaternary structure, associates with the mitochondrial ribosome (mitoribosome). Only transiently interacts with the mitoribosome. Specific enzymatic cleavages in vivo by mitochondrial processing peptidase (MPP) yield mature proteins including rsm22-2 and cox11-2.

The protein localises to the mitochondrion. It localises to the mitochondrion inner membrane. Its function is as follows. Mitochondrial ribosome (mitoribosome) assembly factor. Binds at the interface of the head and body domains of the mitochondrial small ribosomal subunit (mt-SSU), occluding the mRNA channel and preventing compaction of the head domain towards the body. Probable inactive methyltransferase: retains the characteristic folding and ability to bind S-adenosyl-L-methionine, but it probably lost its methyltransferase activity. Functionally, exerts its effect at some terminal stage of cytochrome c oxidase synthesis, probably by being involved in the insertion of the copper B into subunit I. The polypeptide is Rsm22-cox11 tandem protein 2, mitochondrial (cox1102) (Schizosaccharomyces pombe (strain 972 / ATCC 24843) (Fission yeast)).